The following is a 467-amino-acid chain: Phytase A (467 aa).

The signal sequence occupies residues 1 to 23; it reads MGVSAVLLPLYLLAGVTSGLAVP. Asn-27 carries N-linked (GlcNAc...) asparagine glycosylation. A disulfide bridge links Cys-31 with Cys-40. The 1D-myo-inositol hexakisphosphate site is built by Gln-50 and Tyr-51. N-linked (GlcNAc...) asparagine glycosylation occurs at Asn-59. 4 disulfides stabilise this stretch: Cys-71/Cys-414, Cys-215/Cys-465, Cys-264/Cys-282, and Cys-436/Cys-444. 1D-myo-inositol hexakisphosphate contacts are provided by Arg-81, His-82, Arg-85, and Thr-88. His-82 serves as the catalytic Nucleophile. N-linked (GlcNAc...) asparagine glycosylation is found at Asn-105 and Asn-120. Position 165 (Arg-165) interacts with 1D-myo-inositol hexakisphosphate. Residues Asn-207 and Asn-230 are each glycosylated (N-linked (GlcNAc...) asparagine). Residue Lys-301 coordinates 1D-myo-inositol hexakisphosphate. Residues Asn-339 and Asn-352 are each glycosylated (N-linked (GlcNAc...) asparagine). 1D-myo-inositol hexakisphosphate is bound by residues His-361 and Asp-362. N-linked (GlcNAc...) asparagine glycosylation is found at Asn-376 and Asn-388.

Belongs to the histidine acid phosphatase family. Monomer.

Its subcellular location is the secreted. The enzyme catalyses 1D-myo-inositol hexakisphosphate + H2O = 1D-myo-inositol 1,2,4,5,6-pentakisphosphate + phosphate. It carries out the reaction 1D-myo-inositol 1,2,4,5,6-pentakisphosphate + H2O = 1D-myo-inositol 1,2,5,6-tetrakisphosphate + phosphate. The catalysed reaction is 1D-myo-inositol 1,2,5,6-tetrakisphosphate + H2O = 1D-myo-inositol 1,2,6-trisphosphate + phosphate. It catalyses the reaction 1D-myo-inositol 1,2,6-trisphosphate + H2O = 1D-myo-inositol 1,2-bisphosphate + phosphate. The enzyme catalyses 1D-myo-inositol 1,2-bisphosphate + H2O = 1D-myo-inositol 2-phosphate + phosphate. Catalyzes the phosphate monoester hydrolysis of phytic acid (myo-inositol hexakisphosphate), which results in the stepwise formation of myo-inositol pentakis-, tetrakis-, tris-, bis-, and monophosphates, as well as the liberation of inorganic phosphate. Myo-inositol 2-monophosphate is the end product. This is Phytase A (phyA) from Aspergillus awamori (Black koji mold).